We begin with the raw amino-acid sequence, 398 residues long: Putative L-rhamnonate dehydratase (398 aa).

Positions 29 and 55 each coordinate substrate. Mg(2+) is bound by residues Asp-221, Glu-247, and Glu-274. The active-site Proton acceptor is the His-324. Glu-344 contributes to the substrate binding site.

It belongs to the mandelate racemase/muconate lactonizing enzyme family. RhamD subfamily. Mg(2+) is required as a cofactor.

It catalyses the reaction L-rhamnonate = 2-dehydro-3-deoxy-L-rhamnonate + H2O. Its function is as follows. Catalyzes the dehydration of L-rhamnonate to 2-keto-3-deoxy-L-rhamnonate (KDR). The protein is Putative L-rhamnonate dehydratase of Caldivirga maquilingensis (strain ATCC 700844 / DSM 13496 / JCM 10307 / IC-167).